We begin with the raw amino-acid sequence, 508 residues long: Flagellin (508 aa).

Belongs to the bacterial flagellin family.

The protein resides in the secreted. It is found in the bacterial flagellum. Its function is as follows. Flagellin is the subunit protein which polymerizes to form the filaments of bacterial flagella. The sequence is that of Flagellin (fliC) from Salmonella berta.